Consider the following 637-residue polypeptide: MGTASRGGSVKAEKMPEGEKTRQCKQETEQQQKEDEREGLIEFYGSYQDVFQFFCSNTTIHGAIRLVCSKKNKMKTAFWSVLFILTFGLMYWQFGILYREYFSYPVNLNLNLNSDRLTFPAVTLCTLNPYRYSAIRKKLDELDQITHQTLLDLYDYNMSLARSDGSAQFSHRRTSRSLLHHVQRHPLRRQKRDNLVSLPENSPSVDKNDWKIGFVLCSENNEDCFHQTYSSGVDAVREWYSFHYINILAQMPDAKDLDESDFENFIYACRFNEATCDKANYTHFHHPLYGNCYTFNDNSSSLWTSSLPGINNGLSLVVRTEQNDFIPLLSTVTGARVMVHDQNEPAFMDDGGFNVRPGIETSISMRKEMTERLGGSYSDCTEDGSDVPVQNLYSSRYTEQVCIRSCFQLNMVKRCSCAYYFYPLPDGAEYCDYTKHVAWGYCYYKLLAEFKADVLGCFHKCRKPCKMTEYQLSAGYSRWPSAVSEDWVFYMLSQQNKYNITSKRNGVAKVNIFFEEWNYKTNGESPAFTVVTLLSQLGNQWSLWFGSSVLSVMELAELILDFTVITFILAFRWFRSKQWHSSPAPPPNSHDNTAFQDEASGLDAPHRFTVEAVVTTLPSYNSLEPCGPSKDGETGLE.

A disordered region spans residues 1–34 (MGTASRGGSVKAEKMPEGEKTRQCKQETEQQQKE). Topologically, residues 1-76 (MGTASRGGSV…VCSKKNKMKT (76 aa)) are cytoplasmic. A compositionally biased stretch (basic and acidic residues) spans 11–34 (KAEKMPEGEKTRQCKQETEQQQKE). The helical transmembrane segment at 77-97 (AFWSVLFILTFGLMYWQFGIL) threads the bilayer. Over 98–548 (YREYFSYPVN…NQWSLWFGSS (451 aa)) the chain is Extracellular. 10 cysteine pairs are disulfide-bonded: C125-C292, C217-C224, C269-C276, C380-C465, C402-C442, C402-C461, C406-C457, C415-C442, C415-C465, and C417-C431. The helical transmembrane segment at 549–569 (VLSVMELAELILDFTVITFIL) threads the bilayer. The Cytoplasmic portion of the chain corresponds to 570-637 (AFRWFRSKQW…PSKDGETGLE (68 aa)).

This sequence belongs to the amiloride-sensitive sodium channel (TC 1.A.6) family. SCNN1A subfamily. As to quaternary structure, heterotrimer; containing an alpha/SCNN1A, a beta/SCNN1B and a gamma/SCNN1G subunit. The long isoform has been found in cochlea, colon, and cartilage. The short isoform is only found in cochlea.

The protein localises to the apical cell membrane. It is found in the cell projection. Its subcellular location is the cilium. It localises to the cytoplasmic granule. The protein resides in the cytoplasm. The protein localises to the cytoplasmic vesicle. It is found in the secretory vesicle. Its subcellular location is the acrosome. It localises to the flagellum. It carries out the reaction Na(+)(in) = Na(+)(out). With respect to regulation, originally identified and characterized by its inhibition by the diuretic drug amiloride. In terms of biological role, this is one of the three pore-forming subunits of the heterotrimeric epithelial sodium channel (ENaC), a critical regulator of sodium balance and fluid homeostasis. ENaC operates in epithelial tissues, where it mediates the electrodiffusion of sodium ions from extracellular fluid through the apical membrane of cells, with water following osmotically. The protein is Epithelial sodium channel subunit alpha of Gallus gallus (Chicken).